The following is a 113-amino-acid chain: Protein translation factor SUI1 homolog 2 (113 aa).

Position 2 is an N-acetylserine (Ser-2).

This sequence belongs to the SUI1 family.

Its function is as follows. Probably involved in translation. This chain is Protein translation factor SUI1 homolog 2, found in Arabidopsis thaliana (Mouse-ear cress).